We begin with the raw amino-acid sequence, 100 residues long: Urease subunit gamma (100 aa).

Belongs to the urease gamma subunit family. Heterotrimer of UreA (gamma), UreB (beta) and UreC (alpha) subunits. Three heterotrimers associate to form the active enzyme.

It is found in the cytoplasm. The catalysed reaction is urea + 2 H2O + H(+) = hydrogencarbonate + 2 NH4(+). It functions in the pathway nitrogen metabolism; urea degradation; CO(2) and NH(3) from urea (urease route): step 1/1. The chain is Urease subunit gamma from Rhizobium etli (strain CIAT 652).